The sequence spans 433 residues: Phosphomethylpyrimidine synthase (433 aa).

Substrate-binding positions include asparagine 69, methionine 98, tyrosine 127, histidine 163, 185 to 187 (SRG), 226 to 229 (DACR), and glutamate 265. Zn(2+) is bound at residue histidine 269. Tyrosine 292 is a binding site for substrate. Zn(2+) is bound at residue histidine 333. The [4Fe-4S] cluster site is built by cysteine 409, cysteine 412, and cysteine 416.

The protein belongs to the ThiC family. The cofactor is [4Fe-4S] cluster.

It catalyses the reaction 5-amino-1-(5-phospho-beta-D-ribosyl)imidazole + S-adenosyl-L-methionine = 4-amino-2-methyl-5-(phosphooxymethyl)pyrimidine + CO + 5'-deoxyadenosine + formate + L-methionine + 3 H(+). The protein operates within cofactor biosynthesis; thiamine diphosphate biosynthesis. In terms of biological role, catalyzes the synthesis of the hydroxymethylpyrimidine phosphate (HMP-P) moiety of thiamine from aminoimidazole ribotide (AIR) in a radical S-adenosyl-L-methionine (SAM)-dependent reaction. In Clostridioides difficile (strain 630) (Peptoclostridium difficile), this protein is Phosphomethylpyrimidine synthase.